The sequence spans 313 residues: MGNELQHRTVLLDEAVDALVTRPDGVYVDGTFGRGGHSRAVLARLSDAGRLIAFDKDPRAIETASGIEDARFEIVHDSFAAMKGALDARGVGRVSGVLLDLGVSSPQVDDPERGFSFRANGPLDMRMDPTRGESAAEWLARASVQELTEVIRDYGEERFAFQIAKAIVARRAESDRLGPLDSTGELAQIVGHVVKTREKGKDPATRTFQAIRIHVNQELADLQVVLEAALSLLEQGGRLVVISFHSLEDRIVKRFLQTHASAPAVDRRLPIRAVDLPSPPLKLLGRMFPSDAEVAANPRARSAVMRIAERVAP.

S-adenosyl-L-methionine contacts are provided by residues 35 to 37 (GGH), Asp55, Phe79, Asp100, and Gln107.

This sequence belongs to the methyltransferase superfamily. RsmH family.

The protein resides in the cytoplasm. It catalyses the reaction cytidine(1402) in 16S rRNA + S-adenosyl-L-methionine = N(4)-methylcytidine(1402) in 16S rRNA + S-adenosyl-L-homocysteine + H(+). Specifically methylates the N4 position of cytidine in position 1402 (C1402) of 16S rRNA. In Burkholderia thailandensis (strain ATCC 700388 / DSM 13276 / CCUG 48851 / CIP 106301 / E264), this protein is Ribosomal RNA small subunit methyltransferase H.